Reading from the N-terminus, the 1234-residue chain is Transcription-repair-coupling factor (1234 aa).

The 162-residue stretch at 663-824 (DMEKPIPMDR…LAGIREMSTI (162 aa)) folds into the Helicase ATP-binding domain. 676 to 683 (GDVGYGKT) contacts ATP. The DEEQ box motif lies at 777–780 (DEEQ). One can recognise a Helicase C-terminal domain in the interval 842–999 (DDKQIAAALR…GMAVALKDLE (158 aa)). Residues 1207–1234 (RQHIGITNPSPPGEDGRGRNTTIKERQP) are disordered. Residues 1220–1234 (EDGRGRNTTIKERQP) show a composition bias toward basic and acidic residues.

This sequence in the N-terminal section; belongs to the UvrB family. In the C-terminal section; belongs to the helicase family. RecG subfamily.

It localises to the cytoplasm. In terms of biological role, couples transcription and DNA repair by recognizing RNA polymerase (RNAP) stalled at DNA lesions. Mediates ATP-dependent release of RNAP and its truncated transcript from the DNA, and recruitment of nucleotide excision repair machinery to the damaged site. This Mycobacterium bovis (strain ATCC BAA-935 / AF2122/97) protein is Transcription-repair-coupling factor.